A 411-amino-acid chain; its full sequence is Serine--tRNA ligase (411 aa).

An L-serine-binding site is contributed by 226-228; it reads TSE. 257–259 is a binding site for ATP; the sequence is RKE. Glu280 serves as a coordination point for L-serine. 344 to 347 lines the ATP pocket; that stretch reads EISS. An L-serine-binding site is contributed by Ser379.

It belongs to the class-II aminoacyl-tRNA synthetase family. Type-1 seryl-tRNA synthetase subfamily. As to quaternary structure, homodimer. The tRNA molecule binds across the dimer.

It localises to the cytoplasm. The enzyme catalyses tRNA(Ser) + L-serine + ATP = L-seryl-tRNA(Ser) + AMP + diphosphate + H(+). It catalyses the reaction tRNA(Sec) + L-serine + ATP = L-seryl-tRNA(Sec) + AMP + diphosphate + H(+). Its pathway is aminoacyl-tRNA biosynthesis; selenocysteinyl-tRNA(Sec) biosynthesis; L-seryl-tRNA(Sec) from L-serine and tRNA(Sec): step 1/1. Functionally, catalyzes the attachment of serine to tRNA(Ser). Is also able to aminoacylate tRNA(Sec) with serine, to form the misacylated tRNA L-seryl-tRNA(Sec), which will be further converted into selenocysteinyl-tRNA(Sec). This Campylobacter jejuni subsp. doylei (strain ATCC BAA-1458 / RM4099 / 269.97) protein is Serine--tRNA ligase.